The following is a 252-amino-acid chain: Putative teichuronic acid biosynthesis glycosyltransferase TuaG (252 aa).

This sequence belongs to the glycosyltransferase 2 family.

It participates in cell wall biogenesis; teichuronic acid biosynthesis. The sequence is that of Putative teichuronic acid biosynthesis glycosyltransferase TuaG (tuaG) from Bacillus subtilis (strain 168).